The following is a 349-amino-acid chain: KH domain-containing, RNA-binding, signal transduction-associated protein 2 (349 aa).

The KH domain maps to 65–135; sequence LIPVKQYPKF…HLSDELHVLI (71 aa). Disordered stretches follow at residues 181–263 and 320–349; these read SEES…PPPA and EEWT…YGRY. Low complexity predominate over residues 218–231; it reads RGVLTPRGTTVTRG. Omega-N-methylarginine occurs at positions 230 and 240. The span at 340–349 shows a compositional bias: basic and acidic residues; that stretch reads GYREHPYGRY.

Belongs to the KHDRBS family. As to quaternary structure, self-associates to form homooligomers. Interacts with SAFB, SFRS9 and YTHDC1. Found in a complex with KHDRBS1, KHDRBS2 and KHDRBS3. Interacts with RBMX. Interacts with the SH3 domains of FYN and PLCG1. Interacts with the SH2 domains of FYN, GRAP2, PLCG1 and RASA1. Interacts with RBMX. Methylated. In terms of processing, phosphorylated on tyrosine residues by FYN. Tyrosine phosphorylated by PTK6 and SRC. Tyrosine phosphorylated by SRC during mitosis. As to expression, expressed in the cortex, cerebellum, striatum, midbrain, brainstem and thalamus of the brain (at protein level). Expressed in neurons (at protein level). Expressed in brain and testis. Expressed in the dentate gyrus of the hippocampus.

It is found in the nucleus. In terms of biological role, RNA-binding protein that plays a role in the regulation of alternative splicing and influences mRNA splice site selection and exon inclusion. Its phosphorylation by FYN inhibits its ability to regulate splice site selection. Induces an increased concentration-dependent incorporation of exon in CD44 pre-mRNA by direct binding to purine-rich exonic enhancer. May function as an adapter protein for Src kinases during mitosis. Binds both poly(A) and poly(U) homopolymers. Phosphorylation by PTK6 inhibits its RNA-binding ability. The protein is KH domain-containing, RNA-binding, signal transduction-associated protein 2 (Khdrbs2) of Rattus norvegicus (Rat).